Consider the following 142-residue polypeptide: Protein OrfX1 (142 aa).

Belongs to the TULIP P47 family. As to quaternary structure, orfX1 was not detected as part of a crude toxin extract that includes BoNTA2/NTNH, P47, OrfX2 and OrfX3.

Part of a botulinum neurotoxin type A2 (BoNT) locus; may be part of a progenitor toxin complex required to protect BoNT during its passage through the host gastrointestinal tract. Binds phosphatidylinositol (3,4) bisphosphate, phosphatidylethanolamine and phosphatidylserine. This chain is Protein OrfX1 (orfX1), found in Clostridium botulinum (strain Kyoto / Type A2).